Here is a 254-residue protein sequence, read N- to C-terminus: Bowman-Birk type bran trypsin inhibitor (254 aa).

Positions 1–22 (MSNTTMATSTILLFLLAGLAAA) are cleaved as a signal peptide. Residues 23–118 (HGDGDTTIRL…KCTAALDGLS (96 aa)) constitute a propeptide that is removed on maturation. Repeats lie at residues 46–120 (KPWD…LSME), 121–187 (RPWK…FCTP), and 188–251 (RPWG…CKPR). Intrachain disulfides connect Cys125–Cys185, Cys126–Cys143, Cys152–Cys159, Cys156–Cys172, Cys193–Cys248, Cys194–Cys209, Cys199–Cys207, Cys216–Cys223, and Cys220–Cys236. The propeptide occupies 252 to 254 (AEN).

Belongs to the Bowman-Birk serine protease inhibitor family.

This Oryza sativa subsp. japonica (Rice) protein is Bowman-Birk type bran trypsin inhibitor (RBBI3.3).